A 465-amino-acid polypeptide reads, in one-letter code: Sperm microtubule associated protein 2-like (465 aa).

Positions Met1 to Glu29 are enriched in polar residues. Positions Met1–Pro140 are disordered. Composition is skewed to basic and acidic residues over residues Leu40 to Arg70 and Lys114 to Glu137. THEG repeat units lie at residues Arg174–Gln192, Gly214–Val233, Pro260–Phe279, Ser297–Thr316, Ser333–Lys352, Ala373–Val392, Ala409–Arg428, and Ala446–Arg465.

The chain is Sperm microtubule associated protein 2-like from Homo sapiens (Human).